Consider the following 233-residue polypeptide: MTEVTYQIQDQIKQFNNFNPIQKTNYKYQYNSDNENSSLVYLIKNPKQNNFKNYNNKICNYKRSLSSSSFQGNEEKETRKKNKAQFYENDFENGFGNISSWLNNSIPYKCEDCNGNNEPPHQKLKSQDIPLFTFFEPLTFIHEINKVIHIELEIAGVDKDDVKVDLTNNILTIVAKKKSVYPLFQNMCEFKRHEKSIGVYKRVLEFNSNTVDKDTIKARYVNGILLITVNKFL.

The sHSP domain occupies 129–233; it reads IPLFTFFEPL…ILLITVNKFL (105 aa).

The protein belongs to the small heat shock protein (HSP20) family.

In Dictyostelium discoideum (Social amoeba), this protein is Small heat shock protein hspF (hspF-1).